We begin with the raw amino-acid sequence, 35 residues long: Photosystem II reaction center protein T (35 aa).

The helical transmembrane segment at 3 to 23 (ALVYTFLLVSTLGIIFFAIFF) threads the bilayer.

It belongs to the PsbT family. In terms of assembly, PSII is composed of 1 copy each of membrane proteins PsbA, PsbB, PsbC, PsbD, PsbE, PsbF, PsbH, PsbI, PsbJ, PsbK, PsbL, PsbM, PsbT, PsbY, PsbZ, Psb30/Ycf12, at least 3 peripheral proteins of the oxygen-evolving complex and a large number of cofactors. It forms dimeric complexes.

The protein localises to the plastid. It localises to the chloroplast thylakoid membrane. Its function is as follows. Found at the monomer-monomer interface of the photosystem II (PS II) dimer, plays a role in assembly and dimerization of PSII. PSII is a light-driven water plastoquinone oxidoreductase, using light energy to abstract electrons from H(2)O, generating a proton gradient subsequently used for ATP formation. The polypeptide is Photosystem II reaction center protein T (Ceratophyllum demersum (Rigid hornwort)).